The following is a 274-amino-acid chain: MAIKSYKPTSAGRRHQTCSTFEEITTSQPERSLVVKLKKTGGRNNFGRITSRHIGGGHKQKYRIIDFRRDKRDIPAKVASVEYDPYRSARIALLNYADGEKRYIIAPLDLKVGDTVVASTSADIKPGNALPIRSIPLGTIIHNIELKIGKGAQLARSAGTFAQLMAKEEKYAQVKLPSGEVRMVLMDCMATIGQVGNLDHENVSIGKAGRSRWLGKRPKVRGVAMNPVDHPHGGGEGRTSGGRHPVTPWGIPTKGYKTRTNKTSTRFIVKRRTK.

The tract at residues 223–258 (VAMNPVDHPHGGGEGRTSGGRHPVTPWGIPTKGYKT) is disordered.

This sequence belongs to the universal ribosomal protein uL2 family. Part of the 50S ribosomal subunit. Forms a bridge to the 30S subunit in the 70S ribosome.

Functionally, one of the primary rRNA binding proteins. Required for association of the 30S and 50S subunits to form the 70S ribosome, for tRNA binding and peptide bond formation. It has been suggested to have peptidyltransferase activity; this is somewhat controversial. Makes several contacts with the 16S rRNA in the 70S ribosome. This Geotalea daltonii (strain DSM 22248 / JCM 15807 / FRC-32) (Geobacter daltonii) protein is Large ribosomal subunit protein uL2.